The primary structure comprises 425 residues: MLDLKRIRTDFDTVAAKLKNRGVSEDTLTHLKELDEKRRTLLVQSEELKAERNIASAAIAQAKRQKEDATQQIADMQKVSADIKTIDNQLVAIDQQVTDIITVLPNTPHDSVPVGADEEDNVEIRRWGTPRDFNFEVKAHWDLGEDLDILDWERGAKVTGARFLFYKNLGARLERALYNFMLDEHIKEGYQEIITPYMVNHDSMFGTGQYPKFKEDTFELADTNFVLIPTAEVPLTNYYRGEILDGKELPIYFTAMSPSFRSEAGSAGRDTRGLIRLHQFHKVEMVKFAKPEESYQELEKMTANAENILQKLGLPYRVISLCTGDMGFSAAKTYDLEVWIPAQNTYREISSCSNTEDFQARRAQIRYRDEADGKVKLLHTLNGSGLAVGRTVAAILENYQNEDGSVTIPEVLRPYMGGETVISPK.

230–232 (TAE) lines the L-serine pocket. Residue 261 to 263 (RSE) participates in ATP binding. Glu284 is a binding site for L-serine. An ATP-binding site is contributed by 348 to 351 (EISS). Residue Ser384 coordinates L-serine.

The protein belongs to the class-II aminoacyl-tRNA synthetase family. Type-1 seryl-tRNA synthetase subfamily. In terms of assembly, homodimer. The tRNA molecule binds across the dimer.

Its subcellular location is the cytoplasm. It catalyses the reaction tRNA(Ser) + L-serine + ATP = L-seryl-tRNA(Ser) + AMP + diphosphate + H(+). The enzyme catalyses tRNA(Sec) + L-serine + ATP = L-seryl-tRNA(Sec) + AMP + diphosphate + H(+). It participates in aminoacyl-tRNA biosynthesis; selenocysteinyl-tRNA(Sec) biosynthesis; L-seryl-tRNA(Sec) from L-serine and tRNA(Sec): step 1/1. In terms of biological role, catalyzes the attachment of serine to tRNA(Ser). Is also able to aminoacylate tRNA(Sec) with serine, to form the misacylated tRNA L-seryl-tRNA(Sec), which will be further converted into selenocysteinyl-tRNA(Sec). This chain is Serine--tRNA ligase, found in Streptococcus pyogenes serotype M12 (strain MGAS2096).